Reading from the N-terminus, the 84-residue chain is Small ribosomal subunit protein uS17 (84 aa).

It belongs to the universal ribosomal protein uS17 family. In terms of assembly, part of the 30S ribosomal subunit.

Functionally, one of the primary rRNA binding proteins, it binds specifically to the 5'-end of 16S ribosomal RNA. The chain is Small ribosomal subunit protein uS17 from Sodalis glossinidius (strain morsitans).